The chain runs to 574 residues: Kelch-like protein 18 (574 aa).

Residues 66–105 (MFTNDMMECKQDEIVMQGMDPSALEALINFAYNGNLAIDQ) form the BTB domain. The 103-residue stretch at 140-242 (CLGVRQFAET…RPQFLSDRVQ (103 aa)) folds into the BACK domain. 6 Kelch repeats span residues 289 to 336 (LIYA…VVNG), 337 to 383 (LLYA…VLDG), 384 to 430 (QIYV…VFEG), 432 to 477 (IYVS…SLGS), 479 to 524 (MFVC…ASCG), and 525 to 571 (RLYA…CIPL).

In terms of assembly, interacts with AURKA. Interacts (via BTB domain) with CUL3. Interacts (via kelch repeats) with UNC119.

It functions in the pathway protein modification; protein ubiquitination. Its function is as follows. Substrate-specific adapter of a BCR (BTB-CUL3-RBX1) E3 ubiquitin-protein ligase complex required for mitotic progression and cytokinesis. The BCR(KLHL18) E3 ubiquitin ligase complex mediates the ubiquitination of AURKA leading to its activation at the centrosome which is required for initiating mitotic entry. Regulates light-and dark-dependent alpha-transducin localization changes in rod photoreceptors through UNC119 ubiquitination and degradation. Preferentially ubiquitinates the unphosphorylated form of UNC119 over the phosphorylated form. In the presence of UNC119, under dark-adapted conditions alpha-transducin mislocalizes from the outer segment to the inner part of rod photoreceptors which leads to decreased photoreceptor damage caused by light. This is Kelch-like protein 18 (KLHL18) from Homo sapiens (Human).